The primary structure comprises 165 residues: Serine/threonine-protein phosphatase 2A 56 kDa regulatory subunit epsilon isoform (165 aa).

A disordered region spans residues 1–41 (MSSAPTTPPSVDKVDGFSRKSVRKARQKRSQSSSQFRSQGK). Serine 2 is modified (N-acetylserine). Threonine 7 carries the post-translational modification Phosphothreonine. The span at 20-29 (KSVRKARQKR) shows a compositional bias: basic residues. Phosphoserine occurs at positions 30, 32, and 34. The segment covering 30–41 (SQSSSQFRSQGK) has biased composition (low complexity).

Belongs to the phosphatase 2A regulatory subunit B56 family. In terms of assembly, PP2A consists of a common heterodimeric core enzyme, composed of a 36 kDa catalytic subunit (subunit C) and a 65 kDa constant regulatory subunit (PR65 or subunit A), that associates with a variety of regulatory subunits. Proteins that associate with the core dimer include three families of regulatory subunits B (the R2/B/PR55/B55, R3/B''/PR72/PR130/PR59 and R5/B'/B56 families), the 48 kDa variable regulatory subunit, viral proteins, and cell signaling molecules. Interacts with SGO1. Found in a complex with at least ARL2, PPP2CB; PPP2R1A, PPP2R2A, PPP2R5E and TBCD. Highly expressed in testis, lung and brain.

It localises to the cytoplasm. Functionally, the B regulatory subunit might modulate substrate selectivity and catalytic activity, and might also direct the localization of the catalytic enzyme to a particular subcellular compartment. The protein is Serine/threonine-protein phosphatase 2A 56 kDa regulatory subunit epsilon isoform (PPP2R5E) of Oryctolagus cuniculus (Rabbit).